A 199-amino-acid chain; its full sequence is Early activation antigen CD69 (199 aa).

Over residues methionine 1 to serine 14 the composition is skewed to polar residues. The segment at methionine 1–glutamine 20 is disordered. Topologically, residues methionine 1–serine 40 are cytoplasmic. A helical; Signal-anchor for type II membrane protein transmembrane segment spans residues isoleucine 41–leucine 61. At asparagine 62–arginine 199 the chain is on the extracellular side. Intrachain disulfides connect cysteine 85–cysteine 96, cysteine 113–cysteine 194, and cysteine 173–cysteine 186. Positions tyrosine 92–serine 195 constitute a C-type lectin domain. N-linked (GlcNAc...) asparagine glycosylation is found at asparagine 150, asparagine 166, and asparagine 180.

As to quaternary structure, homodimer; disulfide-linked. Interacts with S100A8 and S100A9. Interacts with galactin-1/LGALS1. Interacts with S1PR1; this interaction mediates S1PR1 degradation. Interacts with JAK3 and STAT5. Post-translationally, constitutive Ser/Thr phosphorylation in both mature thymocytes and activated T-lymphocytes. Expressed on the surface of activated T-cells, B-cells, natural killer cells, neutrophils and platelets. Present also in eosinophils.

It localises to the cell membrane. In terms of biological role, transmembrane protein expressed mainly on T-cells resident in mucosa that plays an essential role in immune cell homeostasis. Rapidly expressed on the surface of platelets, T-lymphocytes and NK cells upon activation by various stimuli, such as antigen recognition or cytokine signaling, stimulates different signaling pathways in different cell types. Negatively regulates Th17 cell differentiation through its carbohydrate dependent interaction with galectin-1/LGALS1 present on immature dendritic cells. Association of CD69 cytoplasmic tail with the JAK3/STAT5 signaling pathway regulates the transcription of RORgamma/RORC and, consequently, differentiation toward the Th17 lineage. Also acts via the S100A8/S100A9 complex present on peripheral blood mononuclear cells to promote the conversion of naive CD4 T-cells into regulatory T-cells. Acts as an oxidized low-density lipoprotein (oxLDL) receptor in CD4 T-lymphocytes and negatively regulates the inflammatory response by inducing the expression of PDCD1 through the activation of NFAT. Participates in adipose tissue-derived mesenchymal stem cells (ASCs)-mediated protection against P.aeruginosa infection. Mechanistically, specifically recognizes P.aeruginosa to promote ERK1 activation, followed by granulocyte-macrophage colony-stimulating factor (GM-CSF) and other inflammatory cytokines secretion. In eosinophils, induces IL-10 production through the ERK1/2 pathway. Negatively regulates the chemotactic responses of effector lymphocytes and dendritic cells (DCs) to sphingosine 1 phosphate/S1P by acting as a S1PR1 receptor agonist and facilitating the internalization and degradation of the receptor. The sequence is that of Early activation antigen CD69 (Cd69) from Mus musculus (Mouse).